The sequence spans 192 residues: A-type ATP synthase subunit E (192 aa).

This sequence belongs to the V-ATPase E subunit family. Has multiple subunits with at least A(3), B(3), C, D, E, F, H, I and proteolipid K(x).

It localises to the cell membrane. Component of the A-type ATP synthase that produces ATP from ADP in the presence of a proton gradient across the membrane. In Halorubrum lacusprofundi (strain ATCC 49239 / DSM 5036 / JCM 8891 / ACAM 34), this protein is A-type ATP synthase subunit E.